A 259-amino-acid polypeptide reads, in one-letter code: 5'-nucleotidase SurE (259 aa).

The a divalent metal cation site is built by aspartate 8, aspartate 9, serine 40, and asparagine 92.

It belongs to the SurE nucleotidase family. A divalent metal cation is required as a cofactor.

It localises to the cytoplasm. The catalysed reaction is a ribonucleoside 5'-phosphate + H2O = a ribonucleoside + phosphate. In terms of biological role, nucleotidase that shows phosphatase activity on nucleoside 5'-monophosphates. This Stenotrophomonas maltophilia (strain R551-3) protein is 5'-nucleotidase SurE.